The sequence spans 369 residues: Tryptophan 2,3-dioxygenase 2 (369 aa).

Substrate-binding positions include 36–40 (FIVVH) and R107. Heme is bound at residue H303. A substrate-binding site is contributed by T317.

This sequence belongs to the tryptophan 2,3-dioxygenase family. As to quaternary structure, homotetramer. It depends on heme as a cofactor.

The catalysed reaction is L-tryptophan + O2 = N-formyl-L-kynurenine. It participates in amino-acid degradation; L-tryptophan degradation via kynurenine pathway; L-kynurenine from L-tryptophan: step 1/2. Its function is as follows. Heme-dependent dioxygenase that catalyzes the oxidative cleavage of the L-tryptophan (L-Trp) pyrrole ring and converts L-tryptophan to N-formyl-L-kynurenine. Catalyzes the oxidative cleavage of the indole moiety. The chain is Tryptophan 2,3-dioxygenase 2 from Ralstonia nicotianae (strain ATCC BAA-1114 / GMI1000) (Ralstonia solanacearum).